We begin with the raw amino-acid sequence, 142 residues long: uncharacterized protein (142 aa).

Residues 1–138 (MLEKLAEAHP…SFMILVKPLA (138 aa)) form the N-acetyltransferase domain.

This is an uncharacterized protein from Bacillus subtilis (strain 168).